Consider the following 203-residue polypeptide: Large ribosomal subunit protein bL25 (203 aa).

Belongs to the bacterial ribosomal protein bL25 family. CTC subfamily. In terms of assembly, part of the 50S ribosomal subunit; part of the 5S rRNA/L5/L18/L25 subcomplex. Contacts the 5S rRNA. Binds to the 5S rRNA independently of L5 and L18.

Functionally, this is one of the proteins that binds to the 5S RNA in the ribosome where it forms part of the central protuberance. In Chlorobium phaeovibrioides (strain DSM 265 / 1930) (Prosthecochloris vibrioformis (strain DSM 265)), this protein is Large ribosomal subunit protein bL25.